We begin with the raw amino-acid sequence, 370 residues long: uncharacterized protein (370 aa).

N-acetylmethionine is present on M1.

It belongs to the ornithine cyclodeaminase/mu-crystallin family.

This is an uncharacterized protein from Saccharomyces cerevisiae (strain ATCC 204508 / S288c) (Baker's yeast).